The sequence spans 343 residues: Protein RecA (343 aa).

ATP is bound at residue 64-71 (GPESSGKT).

The protein belongs to the RecA family.

The protein localises to the cytoplasm. In terms of biological role, can catalyze the hydrolysis of ATP in the presence of single-stranded DNA, the ATP-dependent uptake of single-stranded DNA by duplex DNA, and the ATP-dependent hybridization of homologous single-stranded DNAs. It interacts with LexA causing its activation and leading to its autocatalytic cleavage. The protein is Protein RecA of Bacillus cereus (strain B4264).